Consider the following 334-residue polypeptide: Testis-specific Y-encoded protein 1 (334 aa).

Phosphoserine is present on serine 4. 2 disordered regions span residues 27–46 and 96–146; these read LEGE…PAGD and NEGE…AERR. Basic and acidic residues-rich tracts occupy residues 96-108 and 115-128; these read NEGE…KQEG and ELEK…DSKD.

This sequence belongs to the nucleosome assembly protein (NAP) family. Post-translationally, phosphorylated. As to expression, testis.

It is found in the cytoplasm. The protein localises to the nucleus. May be involved in sperm differentiation and proliferation. This chain is Testis-specific Y-encoded protein 1 (Tspy1), found in Rattus norvegicus (Rat).